Here is a 546-residue protein sequence, read N- to C-terminus: Thermosome subunit beta (546 aa).

Belongs to the TCP-1 chaperonin family. In terms of assembly, forms a Heterooligomeric complex of two stacked eight-membered rings.

Functionally, molecular chaperone; binds unfolded polypeptides in vitro, and has a weak ATPase activity. The protein is Thermosome subunit beta (thsB) of Thermococcus kodakarensis (strain ATCC BAA-918 / JCM 12380 / KOD1) (Pyrococcus kodakaraensis (strain KOD1)).